The chain runs to 430 residues: Histidinol dehydrogenase (430 aa).

NAD(+) is bound by residues Tyr-130, Gln-191, and Asn-214. Substrate-binding residues include Ser-237, Gln-259, and His-262. Zn(2+) is bound by residues Gln-259 and His-262. Residues Glu-327 and His-328 each act as proton acceptor in the active site. Positions 328, 361, 415, and 420 each coordinate substrate. Asp-361 is a Zn(2+) binding site. Residue His-420 coordinates Zn(2+).

It belongs to the histidinol dehydrogenase family. The cofactor is Zn(2+).

The catalysed reaction is L-histidinol + 2 NAD(+) + H2O = L-histidine + 2 NADH + 3 H(+). It functions in the pathway amino-acid biosynthesis; L-histidine biosynthesis; L-histidine from 5-phospho-alpha-D-ribose 1-diphosphate: step 9/9. In terms of biological role, catalyzes the sequential NAD-dependent oxidations of L-histidinol to L-histidinaldehyde and then to L-histidine. The protein is Histidinol dehydrogenase of Brucella melitensis biotype 1 (strain ATCC 23456 / CCUG 17765 / NCTC 10094 / 16M).